A 531-amino-acid polypeptide reads, in one-letter code: Apolipoprotein N-acyltransferase (531 aa).

7 helical membrane passes run isoleucine 8–valine 28, phenylalanine 34–valine 54, proline 69–glycine 89, leucine 105–alanine 125, isoleucine 136–glycine 156, valine 178–isoleucine 198, and alanine 206–leucine 226. The CN hydrolase domain maps to valine 243–glycine 493. Residue glutamate 287 is the Proton acceptor of the active site. Lysine 351 is a catalytic residue. Cysteine 405 (nucleophile) is an active-site residue. A helical transmembrane segment spans residues isoleucine 507–asparagine 527.

This sequence belongs to the CN hydrolase family. Apolipoprotein N-acyltransferase subfamily.

It localises to the cell inner membrane. The enzyme catalyses N-terminal S-1,2-diacyl-sn-glyceryl-L-cysteinyl-[lipoprotein] + a glycerophospholipid = N-acyl-S-1,2-diacyl-sn-glyceryl-L-cysteinyl-[lipoprotein] + a 2-acyl-sn-glycero-3-phospholipid + H(+). Its pathway is protein modification; lipoprotein biosynthesis (N-acyl transfer). Catalyzes the phospholipid dependent N-acylation of the N-terminal cysteine of apolipoprotein, the last step in lipoprotein maturation. This is Apolipoprotein N-acyltransferase from Rhizobium meliloti (strain 1021) (Ensifer meliloti).